The following is a 150-amino-acid chain: NADH-quinone oxidoreductase subunit A (150 aa).

The next 3 helical transmembrane spans lie at 14 to 34 (WAFA…LLGA), 70 to 90 (LVAM…AWAV), and 98 to 118 (LGFI…FYLV).

It belongs to the complex I subunit 3 family. As to quaternary structure, NDH-1 is composed of 13 different subunits. Subunits NuoA, H, J, K, L, M, N constitute the membrane sector of the complex.

It localises to the cell inner membrane. The catalysed reaction is a quinone + NADH + 5 H(+)(in) = a quinol + NAD(+) + 4 H(+)(out). Functionally, NDH-1 shuttles electrons from NADH, via FMN and iron-sulfur (Fe-S) centers, to quinones in the respiratory chain. The immediate electron acceptor for the enzyme in this species is believed to be ubiquinone. Couples the redox reaction to proton translocation (for every two electrons transferred, four hydrogen ions are translocated across the cytoplasmic membrane), and thus conserves the redox energy in a proton gradient. This Proteus mirabilis (strain HI4320) protein is NADH-quinone oxidoreductase subunit A.